The sequence spans 496 residues: Probable G-protein coupled receptor Mth-like 5 (496 aa).

Residues 1–219 lie on the Extracellular side of the membrane; the sequence is MLVKTLGAHF…SNFLLRKILN (219 aa). An N-linked (GlcNAc...) asparagine glycan is attached at Asn-82. The helical transmembrane segment at 220–240 threads the bilayer; the sequence is PIFHGISLVILLVIAIIYFIL. Residues 241 to 246 lie on the Cytoplasmic side of the membrane; that stretch reads PTLRDL. Residues 247-267 traverse the membrane as a helical segment; the sequence is VGNIVTTIAMCLMVSQAADLV. The Extracellular segment spans residues 268-276; that stretch reads RIFTELTSH. Residues 277–297 traverse the membrane as a helical segment; the sequence is VSFIVADIILCFSLLAAFFWL. Residues 298–327 lie on the Cytoplasmic side of the membrane; it reads NSFGFYIWKTFRSRNVFLRVTDGRKYCYYS. The chain crosses the membrane as a helical span at residues 328-348; that stretch reads AYAWGCTATMAALAVFAHFFL. The Extracellular portion of the chain corresponds to 349–366; it reads DAESYKQEHMVGEQETIG. A helical transmembrane segment spans residues 367–387; sequence WLGICIFFAPIACTILVNIFF. The Cytoplasmic portion of the chain corresponds to 388–411; the sequence is YVTTRKLINRRTVYGRIAHKLKAN. A helical transmembrane segment spans residues 412 to 432; sequence FIMFSLMLLVMSIAWLFLIMS. Residues 433–438 are Extracellular-facing; the sequence is WLQMEG. A helical transmembrane segment spans residues 439–459; the sequence is LLYAHIVVNALQTPLLLYICV. The Cytoplasmic segment spans residues 460-496; it reads LRQRHVTFLLKKTCCYNEPPSANDWGDELHYMNGNDY.

It belongs to the G-protein coupled receptor 2 family. Mth subfamily.

The protein resides in the cell membrane. In Drosophila melanogaster (Fruit fly), this protein is Probable G-protein coupled receptor Mth-like 5 (mthl5).